The sequence spans 102 residues: Small ribosomal subunit protein uS10 (102 aa).

It belongs to the universal ribosomal protein uS10 family. As to quaternary structure, part of the 30S ribosomal subunit.

Its function is as follows. Involved in the binding of tRNA to the ribosomes. In Chelativorans sp. (strain BNC1), this protein is Small ribosomal subunit protein uS10.